The following is a 393-amino-acid chain: Small RNA 2'-O-methyltransferase (393 aa).

The S-adenosyl-L-methionine site is built by Tyr36, Gly55, Asp78, Lys83, Val115, and Ile131. Positions 132, 135, 136, and 181 each coordinate Mg(2+). The disordered stretch occupies residues 286-307 (HLPRRKEQAGERGDKPKDIGGS). A compositionally biased stretch (basic and acidic residues) spans 290 to 305 (RKEQAGERGDKPKDIG).

Belongs to the methyltransferase superfamily. HEN1 family. Mg(2+) is required as a cofactor.

Its subcellular location is the cytoplasm. The catalysed reaction is small RNA 3'-end nucleotide + S-adenosyl-L-methionine = small RNA 3'-end 2'-O-methylnucleotide + S-adenosyl-L-homocysteine + H(+). Its function is as follows. Methyltransferase that adds a 2'-O-methyl group at the 3'-end of piRNAs, a class of 24 to 30 nucleotide RNAs that are generated by a Dicer-independent mechanism and are primarily derived from transposons and other repeated sequence elements. This probably protects the 3'-end of piRNAs from uridylation activity and subsequent degradation. Stabilization of piRNAs is essential for gametogenesis. The sequence is that of Small RNA 2'-O-methyltransferase (HENMT1) from Homo sapiens (Human).